The following is an 848-amino-acid chain: Dolabradiene synthase KSL4, chloroplastic (848 aa).

Residues 1 to 64 constitute a chloroplast transit peptide; sequence MASLSFASSH…SRMPRNVDTH (64 aa). Residues 148 to 168 are disordered; it reads QRSDGSWGPDGGSGDHPSSPL. D597, D601, N742, S746, and E750 together coordinate Mg(2+). Residues 597-601 carry the DDXXD motif motif; that stretch reads DDLFD.

It belongs to the terpene synthase family. Requires Mg(2+) as cofactor.

Its subcellular location is the plastid. It is found in the chloroplast. It catalyses the reaction ent-copalyl diphosphate = dolabradiene + diphosphate. In terms of biological role, involved in the production of antifungal dolabralexin phytoalexins in response to biotic and abiotic stresses. In response to fungal infection and in associtation with AN2, is involved in the production dolabradiene, a type of antifungal phytoalexin. Converts ent-copalyl disphosphate (ent-CPP) to dolabradiene. This chain is Dolabradiene synthase KSL4, chloroplastic, found in Zea mays (Maize).